The primary structure comprises 739 residues: Ankyrin repeat and SAM domain-containing protein 6 (739 aa).

8 ANK repeats span residues 1-30 (MGAS…FVDD), 57-86 (LEVR…DARV), 91-120 (TGWS…DPDH), 124-156 (LGNT…RPDD), 158-188 (KKRP…QVDV), 192-221 (DGAS…DVDR), 226-255 (HGWT…DVQL), and 259-290 (NGYT…LVDK). The span at 295–305 (QRGKSALRRRA) shows a compositional bias: basic residues. Disordered stretches follow at residues 295 to 320 (QRGK…TGLK) and 449 to 645 (LRDA…ITDE). Positions 462–478 (PGRSSAGSDTASISRVV) are enriched in polar residues. Composition is skewed to low complexity over residues 490–506 (GPSP…HSSG) and 582–592 (SSRSKSTSPTL). Residues 593–603 (TPSPSPTPAHT) show a composition bias toward pro residues. Low complexity predominate over residues 604-641 (PAPAHTPAHRPTGASADSQGSASTQQRSRSSGGSSSGT). The SAM domain maps to 643 to 706 (TDEDELSGIL…LAAISELNAG (64 aa)).

It localises to the cell projection. Its subcellular location is the cilium. Functionally, required for renal function. The protein is Ankyrin repeat and SAM domain-containing protein 6 (anks6) of Danio rerio (Zebrafish).